We begin with the raw amino-acid sequence, 390 residues long: Homoserine O-succinyltransferase (390 aa).

The AB hydrolase-1 domain occupies 56–365 (NAVLICHALS…SPHGHDAFLL (310 aa)). The active-site Nucleophile is serine 162. Arginine 232 provides a ligand contact to substrate. Catalysis depends on residues aspartate 327 and histidine 360. Aspartate 361 provides a ligand contact to substrate.

Belongs to the AB hydrolase superfamily. MetX family. In terms of assembly, homodimer.

It is found in the cytoplasm. The enzyme catalyses L-homoserine + succinyl-CoA = O-succinyl-L-homoserine + CoA. It functions in the pathway amino-acid biosynthesis; L-methionine biosynthesis via de novo pathway; O-succinyl-L-homoserine from L-homoserine: step 1/1. Functionally, transfers a succinyl group from succinyl-CoA to L-homoserine, forming succinyl-L-homoserine. In vitro, also has serine succinyl transferase activity. The protein is Homoserine O-succinyltransferase of Litchfieldella anticariensis (strain DSM 16096 / CECT 5854 / CIP 108499 / LMG 22089 / FP35) (Halomonas anticariensis).